We begin with the raw amino-acid sequence, 1483 residues long: Heme-responsive zinc finger transcription factor HAP1 (1483 aa).

Polar residues predominate over residues 1 to 50 (MSNTPYNSSVPSIASMTQSSVSRSPNMHTATTPGANTSSNSPPLHMSSDS). The tract at residues 1-56 (MSNTPYNSSVPSIASMTQSSVSRSPNMHTATTPGANTSSNSPPLHMSSDSSKIKRK) is disordered. Cys-64, Cys-67, Cys-74, Cys-81, Cys-84, and Cys-93 together coordinate Zn(2+). The zn(2)-C6 fungal-type DNA-binding region spans 64-93 (CTICRKRKVKCDKLRPHCQQCTKTGVAHLC). The stretch at 105–134 (EKELLKDNELKKLRERVKSLEKTLSKVHSS) forms a coiled coil. A compositionally biased stretch (polar residues) spans 162–176 (VNANTGSASSASHMH). The disordered stretch occupies residues 162-208 (VNANTGSASSASHMHQQQQQQQQQEQQQDFSRSANANANSSSLSISN). The span at 177-208 (QQQQQQQQQEQQQDFSRSANANANSSSLSISN) shows a compositional bias: low complexity. The interval 244–444 (KGDPYLKLLW…NTIPHHQPQS (201 aa)) is heme-responsive; required for HMC formation. HRM repeat units lie at residues 280-285 (KCPINH), 299-304 (KCPVDH), 323-328 (KCPVDH), 347-352 (RCPVDH), 389-394 (KCPVDH), and 415-420 (RCPIDH). Polar residues-rich tracts occupy residues 432–447 (STHNTIPHHQPQSGSH) and 706–734 (QLNATIPATSQDVSNNGSKKANPSTNPTL). Disordered stretches follow at residues 432 to 458 (STHNTIPHHQPQSGSHARSHPAQNRKH) and 706 to 767 (QLNA…KENQ). The segment covering 735–759 (NNNMSAATTNSSSRSGSADSRSGSN) has biased composition (low complexity). An HRM 7 repeat occupies 1192-1197 (KCPVYQ). 2 disordered regions span residues 1266–1289 (DGYIDNNSNNDIPRGISPKPSNGL) and 1386–1411 (NTDTSANGSALSTLTSPQGSDLASNS). Residues 1388-1411 (DTSANGSALSTLTSPQGSDLASNS) show a composition bias toward polar residues.

Binds DNA as a homodimer. Interacts with SRO9 and YDJ1. In the absence of heme, binds to at least four cellular proteins, including YDJ1 and SRO9, forming a high-molecular-weight complex (HMC) which results in repression of its activity and dictates its DNA-binding specificity.

The protein localises to the nucleus. Its function is as follows. Regulation of oxygen dependent gene expression. It modulates the expression of Iso-1 (CYP1) and Iso-2 (CYP3) cytochrome c. In response to heme, promotes transcription of genes encoding functions required for respiration, controlling oxidative damage and repression of anaerobic genes. Binds to the sequence 5'-CGGNNNTNNCGG-3'. The chain is Heme-responsive zinc finger transcription factor HAP1 (HAP1) from Saccharomyces cerevisiae (strain JAY291) (Baker's yeast).